The primary structure comprises 220 residues: GTP cyclohydrolase 1 (220 aa).

Residues cysteine 109, histidine 112, and cysteine 180 each coordinate Zn(2+).

This sequence belongs to the GTP cyclohydrolase I family. As to quaternary structure, homomer.

The enzyme catalyses GTP + H2O = 7,8-dihydroneopterin 3'-triphosphate + formate + H(+). Its pathway is cofactor biosynthesis; 7,8-dihydroneopterin triphosphate biosynthesis; 7,8-dihydroneopterin triphosphate from GTP: step 1/1. This is GTP cyclohydrolase 1 from Edwardsiella ictaluri (strain 93-146).